Reading from the N-terminus, the 473-residue chain is Photosystem II CP43 reaction center protein (473 aa).

Residues 1 to 14 (MKTLYSLRRFYPVE) constitute a propeptide that is removed on maturation. An N-acetylthreonine modification is found at threonine 15. Residue threonine 15 is modified to Phosphothreonine. 5 helical membrane passes run 69-93 (LFEV…PHLA), 134-155 (LLGP…KDRN), 178-200 (KALS…RKIT), 255-275 (KPFA…LSYS), and 291-312 (WFNN…ASQA). Glutamate 367 contacts [CaMn4O5] cluster. Residues 447–471 (RARAAAAGFEKGIDRDFEPVLSMTP) traverse the membrane as a helical segment.

It belongs to the PsbB/PsbC family. PsbC subfamily. As to quaternary structure, PSII is composed of 1 copy each of membrane proteins PsbA, PsbB, PsbC, PsbD, PsbE, PsbF, PsbH, PsbI, PsbJ, PsbK, PsbL, PsbM, PsbT, PsbX, PsbY, PsbZ, Psb30/Ycf12, at least 3 peripheral proteins of the oxygen-evolving complex and a large number of cofactors. It forms dimeric complexes. The cofactor is Binds multiple chlorophylls and provides some of the ligands for the Ca-4Mn-5O cluster of the oxygen-evolving complex. It may also provide a ligand for a Cl- that is required for oxygen evolution. PSII binds additional chlorophylls, carotenoids and specific lipids..

Its subcellular location is the plastid. The protein resides in the chloroplast thylakoid membrane. In terms of biological role, one of the components of the core complex of photosystem II (PSII). It binds chlorophyll and helps catalyze the primary light-induced photochemical processes of PSII. PSII is a light-driven water:plastoquinone oxidoreductase, using light energy to abstract electrons from H(2)O, generating O(2) and a proton gradient subsequently used for ATP formation. The polypeptide is Photosystem II CP43 reaction center protein (Pelargonium hortorum (Common geranium)).